We begin with the raw amino-acid sequence, 362 residues long: Glutaminase-asparaginase (362 aa).

The signal sequence occupies residues 1-25 (MKSALKTFVPGALALLLLFPVAAQA). The Asparaginase/glutaminase domain maps to 35–362 (ANVVILATGG…KELQRMFWEY (328 aa)). Thr45 functions as the Acyl-ester intermediate in the catalytic mechanism. Substrate contacts are provided by residues Ser92 and 125–126 (TD).

This sequence belongs to the asparaginase 1 family. In terms of assembly, homotetramer.

The protein resides in the periplasm. It catalyses the reaction L-glutamine + H2O = L-glutamate + NH4(+). It carries out the reaction L-asparagine + H2O = L-aspartate + NH4(+). The polypeptide is Glutaminase-asparaginase (Pseudomonas fluorescens biotype A).